We begin with the raw amino-acid sequence, 595 residues long: Elongation factor 4 (595 aa).

The tr-type G domain maps to 2 to 183 (KNIRNFCIIA…AIVEQVPAPA (182 aa)). GTP is bound by residues 14-19 (DHGKST) and 130-133 (NKVD).

Belongs to the TRAFAC class translation factor GTPase superfamily. Classic translation factor GTPase family. LepA subfamily.

The protein resides in the cell inner membrane. It carries out the reaction GTP + H2O = GDP + phosphate + H(+). Its function is as follows. Required for accurate and efficient protein synthesis under certain stress conditions. May act as a fidelity factor of the translation reaction, by catalyzing a one-codon backward translocation of tRNAs on improperly translocated ribosomes. Back-translocation proceeds from a post-translocation (POST) complex to a pre-translocation (PRE) complex, thus giving elongation factor G a second chance to translocate the tRNAs correctly. Binds to ribosomes in a GTP-dependent manner. The polypeptide is Elongation factor 4 (Porphyromonas gingivalis (strain ATCC BAA-308 / W83)).